A 246-amino-acid polypeptide reads, in one-letter code: Probable phosphatase AHA_1344 (246 aa).

Zn(2+) contacts are provided by histidine 8, histidine 10, histidine 16, histidine 41, glutamate 74, histidine 102, histidine 132, aspartate 193, and histidine 195.

Belongs to the PHP family. Requires Zn(2+) as cofactor.

In Aeromonas hydrophila subsp. hydrophila (strain ATCC 7966 / DSM 30187 / BCRC 13018 / CCUG 14551 / JCM 1027 / KCTC 2358 / NCIMB 9240 / NCTC 8049), this protein is Probable phosphatase AHA_1344.